The chain runs to 68 residues: MRFFFLLLTVALFLTSITGDDAERMLGMKEGGYVREDCGSDCMPCGGECCCEPNSCIDGTCHHESSPN.

The signal sequence occupies residues 1–29 (MRFFFLLLTVALFLTSITGDDAERMLGMK). Residues 30–35 (EGGYVR) constitute a propeptide that is removed on maturation. Cystine bridges form between Cys38-Cys49, Cys42-Cys51, Cys45-Cys56, and Cys50-Cys61.

This sequence belongs to the conotoxin G2 superfamily. 1 family. As to expression, expressed by the venom duct.

It is found in the secreted. Its function is as follows. This peptide promotes cell proliferation (EC(50)=17.85 uM) and inhibits apoptosis (EC(50)=2.2 uM). This Conus miles (Soldier cone) protein is Conotoxin phi-MiXXVIIA.